The primary structure comprises 287 residues: 4-hydroxybenzoate octaprenyltransferase (287 aa).

7 consecutive transmembrane segments (helical) span residues 30 to 50 (ALWI…FALG), 92 to 112 (IAIA…LNGL), 133 to 153 (FFAI…PMAF), 158 to 178 (DTVP…SVAY), 207 to 227 (VLAI…LGAA), 232 to 252 (WPYW…YTLI), and 266 to 286 (HNNW…ALAV).

It belongs to the UbiA prenyltransferase family. Requires Mg(2+) as cofactor.

It localises to the cell inner membrane. It carries out the reaction all-trans-octaprenyl diphosphate + 4-hydroxybenzoate = 4-hydroxy-3-(all-trans-octaprenyl)benzoate + diphosphate. It participates in cofactor biosynthesis; ubiquinone biosynthesis. In terms of biological role, catalyzes the prenylation of para-hydroxybenzoate (PHB) with an all-trans polyprenyl group. Mediates the second step in the final reaction sequence of ubiquinone-8 (UQ-8) biosynthesis, which is the condensation of the polyisoprenoid side chain with PHB, generating the first membrane-bound Q intermediate 3-octaprenyl-4-hydroxybenzoate. This chain is 4-hydroxybenzoate octaprenyltransferase, found in Burkholderia pseudomallei (strain 1106a).